The chain runs to 321 residues: Phospho-N-acetylmuramoyl-pentapeptide-transferase (321 aa).

10 helical membrane passes run 1 to 21, 50 to 70, 76 to 96, 112 to 132, 140 to 160, 176 to 196, 200 to 220, 225 to 245, 250 to 270, and 300 to 320; these read MIFI…PILI, MGGL…IIFV, IILL…DDYI, FLAQ…FHLV, IPFV…IVFW, GLAT…SYML, AIGI…PYNL, VFMG…ISIM, LSLI…MLQV, and VVTV…WIGV.

It belongs to the glycosyltransferase 4 family. MraY subfamily. Mg(2+) is required as a cofactor.

The protein localises to the cell membrane. The enzyme catalyses UDP-N-acetyl-alpha-D-muramoyl-L-alanyl-gamma-D-glutamyl-L-lysyl-D-alanyl-D-alanine + di-trans,octa-cis-undecaprenyl phosphate = Mur2Ac(oyl-L-Ala-gamma-D-Glu-L-Lys-D-Ala-D-Ala)-di-trans,octa-cis-undecaprenyl diphosphate + UMP. It participates in cell wall biogenesis; peptidoglycan biosynthesis. Functionally, catalyzes the initial step of the lipid cycle reactions in the biosynthesis of the cell wall peptidoglycan: transfers peptidoglycan precursor phospho-MurNAc-pentapeptide from UDP-MurNAc-pentapeptide onto the lipid carrier undecaprenyl phosphate, yielding undecaprenyl-pyrophosphoryl-MurNAc-pentapeptide, known as lipid I. This chain is Phospho-N-acetylmuramoyl-pentapeptide-transferase, found in Staphylococcus epidermidis (strain ATCC 12228 / FDA PCI 1200).